We begin with the raw amino-acid sequence, 248 residues long: Cutinase cut1 (248 aa).

A signal peptide spans 1–17; that stretch reads MRSLSLFTALLAGQAFA. Residues cysteine 79 and cysteine 153 are joined by a disulfide bond. Residue serine 164 is the Nucleophile of the active site. A disulfide bridge links cysteine 212 with cysteine 219. Aspartate 216 is a catalytic residue. Histidine 229 serves as the catalytic Proton donor/acceptor.

Belongs to the cutinase family. The 2 disulfide bonds play a critical role in holding the catalytic residues in juxta-position; reduction of the disulfide bridges results in the complete inactivation of the enzyme.

The protein localises to the secreted. The catalysed reaction is cutin + H2O = cutin monomers.. Functionally, catalyzes the hydrolysis of complex carboxylic polyesters found in the cell wall of plants. May degrade cutin, a macromolecule that forms the structure of the plant cuticle. May also degrade suberin, a specialized macromolecule found in the cell wall of various plant tissues. This is Cutinase cut1 from Trichoderma harzianum (Hypocrea lixii).